Reading from the N-terminus, the 245-residue chain is Protein OXIDATIVE STRESS 3 LIKE 6 (245 aa).

Positions 46–90 (QIGIGLRMSNNNNKSPEESSDSSSSIGESSENEEEEEEDDAVSCQ) are disordered. The segment covering 75–86 (SENEEEEEEDDA) has biased composition (acidic residues). Residues 143 to 151 (NKRRRLVIA) carry the Nuclear localization signal motif. Positions 203–230 (DDHRKIMMMMKNKKELMAQTRSCFCLSS) are kinase-inducible domain (KID).

The protein localises to the nucleus. Functionally, probable transcription factor. Promotes slightly the tolerance to cadmium (Cd) and to oxidizing chemicals (e.g. diamide). This chain is Protein OXIDATIVE STRESS 3 LIKE 6, found in Arabidopsis thaliana (Mouse-ear cress).